Reading from the N-terminus, the 430-residue chain is Target of rapamycin complex 1 subunit toc1 (430 aa).

Phosphoserine occurs at positions 204 and 399.

The target of rapamycin complex 1 (TORC1) is composed of at least mip1, pop3/wat1, tco89, toc1 and tor2.

Its subcellular location is the cytoplasm. In terms of biological role, component of TORC1, which regulates multiple cellular processes to control cell growth in response to environmental signals. Tor2 is essential for growth. Nutrient limitation and environmental stress signals cause inactivation of TORC1. Active TORC1 positively controls cell growth and ribosome biogenesis by regulating ribosomal protein gene expression. TORC1 negatively controls G1 cell-cycle arrest, sexual development and amino acid uptake. Represses mating, meiosis and sporulation efficiency by interfering with the functions of the transcription factor ste11 and the meiosis-promoting RNA-binding protein mei2. The sequence is that of Target of rapamycin complex 1 subunit toc1 from Schizosaccharomyces pombe (strain 972 / ATCC 24843) (Fission yeast).